Reading from the N-terminus, the 1017-residue chain is Type VI secretion system spike protein VgrG3 (1017 aa).

Residue D842 is part of the active site.

Belongs to the VgrG protein family. As to quaternary structure, interacts with TsiV3. Interacts with TseL.

The protein localises to the secreted. In terms of biological role, part of the type VI secretion system specialized secretion system, which delivers several virulence factors in both prokaryotic and eukaryotic cells during infection. Forms the spike at the tip of the elongating tube formed by haemolysin co-regulated protein Hcp. Allows the delivery of the TseL antibacterial toxin to target cells where it exerts its toxicity. Additionally, acts directly as an effector and targets the cell wall peptidoglycan layer of prey cells for degradation via its C-terminus. Toxicity is counteracted by a cognate immunity protein TsiV3. This is Type VI secretion system spike protein VgrG3 from Vibrio cholerae serotype O1 (strain ATCC 39315 / El Tor Inaba N16961).